A 712-amino-acid chain; its full sequence is Polyribonucleotide nucleotidyltransferase (712 aa).

The Mg(2+) site is built by Asp-493 and Asp-499. The KH domain maps to 560-619; that stretch reads PRLLTFKVDPEDIGKIIGPGGKMVRSITEATGAKVDISDDGTITVSSSVGGQAEAARAMI. The S1 motif domain maps to 629 to 697; the sequence is GQVYLGKVTR…HKGRVNLTRL (69 aa).

It belongs to the polyribonucleotide nucleotidyltransferase family. It depends on Mg(2+) as a cofactor.

The protein resides in the cytoplasm. The enzyme catalyses RNA(n+1) + phosphate = RNA(n) + a ribonucleoside 5'-diphosphate. Involved in mRNA degradation. Catalyzes the phosphorolysis of single-stranded polyribonucleotides processively in the 3'- to 5'-direction. The polypeptide is Polyribonucleotide nucleotidyltransferase (Synechococcus sp. (strain JA-3-3Ab) (Cyanobacteria bacterium Yellowstone A-Prime)).